The following is a 171-amino-acid chain: Putative defense protein (171 aa).

An N-terminal signal peptide occupies residues 1 to 23 (MKVYACLCAAVVMLVMTSRVSEA). A Reelin domain is found at 24–171 (RSTGAPLSAC…VQSAPIKIVS (148 aa)). Cysteines 33 and 110 form a disulfide. N-linked (GlcNAc...) asparagine glycosylation is present at asparagine 41.

The protein belongs to the insect defense protein family.

It is found in the secreted. May have antimicrobial activity. The protein is Putative defense protein of Bombyx mori (Silk moth).